The primary structure comprises 365 residues: tRNA/tmRNA (uracil-C(5))-methyltransferase (365 aa).

The S-adenosyl-L-methionine site is built by Gln189, Tyr217, Asn222, Glu238, and Asp298. The active-site Nucleophile is the Cys323. The active-site Proton acceptor is Glu357.

It belongs to the class I-like SAM-binding methyltransferase superfamily. RNA M5U methyltransferase family. TrmA subfamily.

It carries out the reaction uridine(54) in tRNA + S-adenosyl-L-methionine = 5-methyluridine(54) in tRNA + S-adenosyl-L-homocysteine + H(+). The catalysed reaction is uridine(341) in tmRNA + S-adenosyl-L-methionine = 5-methyluridine(341) in tmRNA + S-adenosyl-L-homocysteine + H(+). Functionally, dual-specificity methyltransferase that catalyzes the formation of 5-methyluridine at position 54 (m5U54) in all tRNAs, and that of position 341 (m5U341) in tmRNA (transfer-mRNA). The protein is tRNA/tmRNA (uracil-C(5))-methyltransferase of Shewanella baltica (strain OS155 / ATCC BAA-1091).